We begin with the raw amino-acid sequence, 509 residues long: MATVQEKIELLHEKLAKVKAGGGEKRVEKQHAQGKMTARERLAKLFDDNSFVELDQFVKHRCVNFGQEKKELPGEGVVTGYGTIDGRLVYAFAQDFTVEGGSLGEMHAAKIVKVQRLAMKMGAPIVGINDSGGARIQEAVDALAGYGKIFFENTNASGVIPQISVIMGPCAGGAVYSPALTDFIYMVKNTSQMFITGPAVIKSVTGEEVTAEDLGGAMAHNSVSGVAHFAAENEDDCIAQIRYLLGFLPSNNMEDAPLVDTGDDPTREDESLNSLLPDNSNMPYDMKDVIAATVDNGEYYEVQPFYATNIITCFARFDGQSVGIIANQPKVMAGCLDINASDKSSRFIRFCDAFNIPIVNFVDVPGFLPGTNQEWGGIIRHGAKMLYAYSEATVPKITVITRKAYGGSYLAMCSQDLGADQVYAWPTSEIAVMGPAGAANIIFKKDEDKDAKTAKYVEEFATPYKAAERGFVDVVIEPKQTRPAVINALAMLASKRENRAPKKHGNIPL.

One can recognise a CoA carboxyltransferase N-terminal domain in the interval 4–260 (VQEKIELLHE…NNMEDAPLVD (257 aa)). A CoA carboxyltransferase C-terminal domain is found at 267–503 (REDESLNSLL…SKRENRAPKK (237 aa)).

Belongs to the AccD/PCCB family. As to quaternary structure, the methylmalonyl-CoA decarboxylase is composed of five subunits: the carboxyltransferase alpha subunit (MmdA), the tunnel beta subunit (MmdB), the biotin-containing gamma subunit (MmdC), and the delta (MmdD) and epsilon (MmdE) subunits. Interacts with the gamma subunit.

The protein resides in the cell membrane. The catalysed reaction is (S)-methylmalonyl-CoA + Na(+)(in) + H(+)(out) = propanoyl-CoA + Na(+)(out) + CO2. Its activity is regulated as follows. Completely inhibited by avidin. Its function is as follows. Carboxyltransferase subunit of the sodium ion pump methylmalonyl-CoA decarboxylase, which converts the chemical energy of a decarboxylation reaction into an electrochemical gradient of Na(+) ions across the cytoplasmic membrane, thereby creating a sodium ion motive force that is used for ATP synthesis. The alpha subunit catalyzes the Na(+)-independent carboxyltransfer from methylmalonyl-CoA to the prosthetic biotin group located on the gamma subunit. Can also convert malonyl-CoA into acetyl-CoA. The polypeptide is Methylmalonyl-CoA decarboxylase subunit alpha (Veillonella parvula (Staphylococcus parvulus)).